The sequence spans 573 residues: Probable D-xylulose kinase A (573 aa).

Residues His-97, Arg-168, Asp-284, and Asn-285 each coordinate substrate. ATP-binding positions include Trp-366, 471 to 472 (GG), and Asn-475.

Belongs to the FGGY kinase family.

It is found in the cytoplasm. The enzyme catalyses D-xylulose + ATP = D-xylulose 5-phosphate + ADP + H(+). In terms of biological role, highly specific D-xylulose kinase which participates in the catabolism of xylose. Xylose is a major component of hemicelluloses such as xylan. Most fungi utilize D-xylose via three enzymatic reactions, xylose reductase (XR), xylitol dehydrogenase (XDH), and xylulokinase, to form xylulose 5-phosphate, which enters pentose phosphate pathway. This chain is Probable D-xylulose kinase A (xkiA), found in Neosartorya fischeri (strain ATCC 1020 / DSM 3700 / CBS 544.65 / FGSC A1164 / JCM 1740 / NRRL 181 / WB 181) (Aspergillus fischerianus).